The following is a 1063-amino-acid chain: Cobalt-zinc-cadmium resistance protein CzcA (1063 aa).

A run of 12 helical transmembrane segments spans residues 14–34, 350–370, 371–391, 395–415, 452–472, 487–507, 534–554, 883–903, 906–926, 937–957, 981–1001, and 1013–1033; these read WLVL…YNRL, GAVL…AALI, TATI…NYKI, LMSL…VIVE, LIFG…LTGV, ALLG…ALFI, LANT…CVAI, VVVP…FNNI, GLLV…ALWI, VGFI…LSFI, PVLM…IATG, and VVIG…PVLY. The disordered stretch occupies residues 1040 to 1063; sequence DEDAEDTREPVTQTHQPDQGRQPA. Polar residues predominate over residues 1049–1063; it reads PVTQTHQPDQGRQPA.

Belongs to the resistance-nodulation-cell division (RND) (TC 2.A.6) family.

It is found in the cell inner membrane. Has a low cation transport activity for cobalt, it is essential for the expression of cobalt, zinc, and cadmium resistance. CzcA and CzcB together would act in zinc efflux nearly as effectively as the complete CZC efflux system (CzcABC). In Cupriavidus metallidurans (strain ATCC 43123 / DSM 2839 / NBRC 102507 / CH34) (Ralstonia metallidurans), this protein is Cobalt-zinc-cadmium resistance protein CzcA (czcA).